We begin with the raw amino-acid sequence, 91 residues long: Acyl carrier protein AsbD (91 aa).

The Carrier domain occupies 4 to 82; the sequence is EALKNAVLKI…SLLDFMEELQ (79 aa). At S40 the chain carries O-(pantetheine 4'-phosphoryl)serine.

The protein belongs to the acyl carrier protein (ACP) family. Post-translationally, activated by the transfer of a 4'-phosphopantetheine group from CoA to Ser-40.

Its pathway is siderophore biosynthesis; petrobactin biosynthesis. Functionally, involved in the biosynthesis of petrobactin, a catecholate siderophore that functions in both iron acquisition and virulence. Aryl-carrier protein that activates 3,4-dihydroxybenzoate (3,4-DHBA) prior to its incorporation into petrobactin. In Bacillus anthracis, this protein is Acyl carrier protein AsbD.